The following is a 275-amino-acid chain: Lectin (275 aa).

The N-terminal stretch at 1–30 (MASLQTQMISFYAIFLSILLTTILFFKVNS) is a signal peptide. Positions 149 and 151 each coordinate Mn(2+). The Ca(2+) site is built by aspartate 151, phenylalanine 153, asparagine 155, and aspartate 159. Mn(2+)-binding residues include aspartate 159 and histidine 166. A glycan (N-linked (GlcNAc...) asparagine) is linked at asparagine 217.

This sequence belongs to the leguminous lectin family. Tetramer of two alpha and two beta chains.

Functionally, D-mannose specific lectin. The sequence is that of Lectin (LECA) from Pisum sativum (Garden pea).